The chain runs to 76 residues: U-scoloptoxin(15)-Ssd3b (76 aa).

Positions 1–23 are cleaved as a signal peptide; sequence MEKKIIFLCFLVALLTFPEFISS.

Post-translationally, contains 2 disulfide bonds. As to expression, expressed by the venom gland.

It is found in the secreted. The chain is U-scoloptoxin(15)-Ssd3b from Scolopendra dehaani (Thai centipede).